Here is a 639-residue protein sequence, read N- to C-terminus: tRNA-dihydrouridine(47) synthase [NAD(P)(+)]-like (639 aa).

Polar residues-rich tracts occupy residues Met1–Gln19 and Gln54–Glu65. Disordered regions lie at residues Met1–Lys20 and Asp52–Phe122. Residues Asn66 to Asp85 are compositionally biased toward basic and acidic residues. The segment covering Glu103–His119 has biased composition (basic residues). C3H1-type zinc fingers lie at residues Phe122–Ala152 and Glu160–Asp190. Residues Pro300 to Thr302 and Gln354 contribute to the FMN site. The Proton donor role is filled by Cys385. Residues Lys424, His454, Asn486–Asp488, and Ala509–Arg510 each bind FMN.

Belongs to the Dus family. Dus3 subfamily. It depends on FMN as a cofactor.

The enzyme catalyses 5,6-dihydrouridine(47) in tRNA + NAD(+) = uridine(47) in tRNA + NADH + H(+). It catalyses the reaction 5,6-dihydrouridine(47) in tRNA + NADP(+) = uridine(47) in tRNA + NADPH + H(+). It carries out the reaction a 5,6-dihydrouridine in mRNA + NAD(+) = a uridine in mRNA + NADH + H(+). The catalysed reaction is a 5,6-dihydrouridine in mRNA + NADP(+) = a uridine in mRNA + NADPH + H(+). Its function is as follows. Catalyzes the synthesis of dihydrouridine, a modified base, in various RNAs, such as tRNAs, mRNAs and some long non-coding RNAs (lncRNAs). Mainly modifies the uridine in position 47 (U47) in the D-loop of most cytoplasmic tRNAs. Also able to mediate the formation of dihydrouridine in some mRNAs, thereby regulating their translation. This chain is tRNA-dihydrouridine(47) synthase [NAD(P)(+)]-like (dus3l), found in Xenopus tropicalis (Western clawed frog).